The chain runs to 61 residues: Metallothionein-2 (61 aa).

Met1 carries the N-acetylmethionine modification. Residues 1–29 are beta; it reads MDPNCSCTAGESCTCAGSCKCKDCKCASC. 18 residues coordinate a divalent metal cation: Cys5, Cys7, Cys13, Cys15, Cys19, Cys21, Cys24, Cys26, Cys29, Cys33, Cys34, Cys36, Cys37, Cys41, Cys44, Cys48, Cys50, and Cys57. The interval 30-61 is alpha; it reads KKSCCSCCPVGCAKCAQGCVCKGASDKCSCCA. The residue at position 58 (Ser58) is a Phosphoserine. Cys59 and Cys60 together coordinate a divalent metal cation.

The protein belongs to the metallothionein superfamily. Type 1 family. Interacts with EOLA1.

Metallothioneins have a high content of cysteine residues that bind various heavy metals; these proteins are transcriptionally regulated by both heavy metals and glucocorticoids. This chain is Metallothionein-2 (MT2A), found in Ovis aries (Sheep).